Consider the following 517-residue polypeptide: Crotonobetaine/carnitine--CoA ligase (517 aa).

Belongs to the ATP-dependent AMP-binding enzyme family.

It catalyses the reaction 4-(trimethylamino)butanoate + ATP + CoA = 4-(trimethylamino)butanoyl-CoA + AMP + diphosphate. It carries out the reaction crotonobetaine + ATP + CoA = crotonobetainyl-CoA + AMP + diphosphate. The enzyme catalyses (R)-carnitine + ATP + CoA = (R)-carnitinyl-CoA + AMP + diphosphate. It participates in amine and polyamine metabolism; carnitine metabolism. Its function is as follows. Catalyzes the transfer of CoA to carnitine, generating the initial carnitinyl-CoA needed for the CaiB reaction cycle. Also has activity toward crotonobetaine and gamma-butyrobetaine. The sequence is that of Crotonobetaine/carnitine--CoA ligase from Escherichia coli O139:H28 (strain E24377A / ETEC).